The primary structure comprises 322 residues: ATP-dependent 6-phosphofructokinase (322 aa).

ATP-binding positions include glycine 12, 73–74 (RF), and 103–106 (GDGT). Position 104 (aspartate 104) interacts with Mg(2+). Residue 126–128 (TID) coordinates substrate. Aspartate 128 functions as the Proton acceptor in the catalytic mechanism. Arginine 155 lines the ADP pocket. Substrate-binding positions include arginine 163 and 170–172 (MGR). ADP-binding positions include 186-188 (GSE), lysine 212, and 214-216 (KPS). Substrate-binding positions include glutamate 223, arginine 245, and 251 to 254 (HTQR).

Belongs to the phosphofructokinase type A (PFKA) family. ATP-dependent PFK group I subfamily. Prokaryotic clade 'B1' sub-subfamily. In terms of assembly, homotetramer. Mg(2+) serves as cofactor.

The protein localises to the cytoplasm. The enzyme catalyses beta-D-fructose 6-phosphate + ATP = beta-D-fructose 1,6-bisphosphate + ADP + H(+). It functions in the pathway carbohydrate degradation; glycolysis; D-glyceraldehyde 3-phosphate and glycerone phosphate from D-glucose: step 3/4. With respect to regulation, allosterically activated by ADP and other diphosphonucleosides, and allosterically inhibited by phosphoenolpyruvate. In terms of biological role, catalyzes the phosphorylation of D-fructose 6-phosphate to fructose 1,6-bisphosphate by ATP, the first committing step of glycolysis. This Mesomycoplasma hyopneumoniae (strain 232) (Mycoplasma hyopneumoniae) protein is ATP-dependent 6-phosphofructokinase.